The chain runs to 694 residues: Ubiquitin-like modifier-activating enzyme ATG7 (694 aa).

Residues glycine 370–glycine 375 carry the GXGXXG motif motif. Residue cysteine 550 is the Glycyl thioester intermediate of the active site. The interval alanine 650–glycine 689 is homodimerization.

It belongs to the ATG7 family. As to quaternary structure, homodimer. Interacts with ATG8 through a thioester bond between Cys-550 and the C-terminal 'Gly-116' of ATG8 and with ATG12 through a thioester bond between Cys-550 and the C-terminal 'Gly-160' of ATG12. Also interacts with ATG3.

It is found in the cytoplasm. It localises to the preautophagosomal structure. E1-like activating enzyme involved in the 2 ubiquitin-like systems required for cytoplasm to vacuole transport (Cvt) and autophagy. Activates ATG12 for its conjugation with ATG5 and ATG8 for its conjugation with phosphatidylethanolamine. Both systems are needed for the ATG8 association to Cvt vesicles and autophagosomes membranes. Autophagy is essential for maintenance of amino acid levels and protein synthesis under nitrogen starvation. Required for selective autophagic degradation of the nucleus (nucleophagy) as well as for mitophagy which contributes to regulate mitochondrial quantity and quality by eliminating the mitochondria to a basal level to fulfill cellular energy requirements and preventing excess ROS production. Autophagy is required for proper vegetative growth, asexual/sexual reproduction, and full virulence. Autophagy is particularly involved in the biosynthesis of deoxynivalenol (DON), an important virulence determinant. This chain is Ubiquitin-like modifier-activating enzyme ATG7, found in Gibberella zeae (strain ATCC MYA-4620 / CBS 123657 / FGSC 9075 / NRRL 31084 / PH-1) (Wheat head blight fungus).